A 188-amino-acid chain; its full sequence is Elongation factor P (188 aa).

The protein belongs to the elongation factor P family.

Its subcellular location is the cytoplasm. The protein operates within protein biosynthesis; polypeptide chain elongation. Involved in peptide bond synthesis. Stimulates efficient translation and peptide-bond synthesis on native or reconstituted 70S ribosomes in vitro. Probably functions indirectly by altering the affinity of the ribosome for aminoacyl-tRNA, thus increasing their reactivity as acceptors for peptidyl transferase. This Chlorobium limicola (strain DSM 245 / NBRC 103803 / 6330) protein is Elongation factor P.